Here is a 156-residue protein sequence, read N- to C-terminus: Ribonuclease pancreatic (156 aa).

Positions 1-28 (MALEKSLVLLPLLVLILLVLGWVQPSLG) are cleaved as a signal peptide. The segment covering 33–43 (AKKFQRQHVDS) has biased composition (basic and acidic residues). A disordered region spans residues 33-53 (AKKFQRQHVDSDSSPSSSSTY). 2 residues coordinate substrate: lysine 35 and arginine 38. Histidine 40 (proton acceptor) is an active-site residue. 4 cysteine pairs are disulfide-bonded: cysteine 54–cysteine 112, cysteine 68–cysteine 123, cysteine 86–cysteine 138, and cysteine 93–cysteine 100. N-linked (GlcNAc...) asparagine glycosylation occurs at asparagine 62. Residues 69–73 (KPVNT) and lysine 94 each bind substrate. A glycan (N-linked (GlcNAc...) asparagine) is linked at asparagine 104. Substrate is bound at residue arginine 113. An N-linked (GlcNAc...) asparagine glycan is attached at asparagine 116. The Proton donor role is filled by histidine 147.

The protein belongs to the pancreatic ribonuclease family. In terms of assembly, monomer. Interacts with and forms tight 1:1 complexes with RNH1. Dimerization of two such complexes may occur. Interaction with RNH1 inhibits this protein. In terms of tissue distribution, pancreas and other tissues and body fluids (indicating it may have other physiological functions besides its role in digestion).

It is found in the secreted. The enzyme catalyses an [RNA] containing cytidine + H2O = an [RNA]-3'-cytidine-3'-phosphate + a 5'-hydroxy-ribonucleotide-3'-[RNA].. The catalysed reaction is an [RNA] containing uridine + H2O = an [RNA]-3'-uridine-3'-phosphate + a 5'-hydroxy-ribonucleotide-3'-[RNA].. Functionally, endonuclease that catalyzes the cleavage of RNA on the 3' side of pyrimidine nucleotides. Acts on single-stranded and double-stranded RNA. This Pan troglodytes (Chimpanzee) protein is Ribonuclease pancreatic (RNASE1).